The following is a 150-amino-acid chain: Transthyretin (150 aa).

The N-terminal stretch at 1-20 is a signal peptide; that stretch reads MAFHSMLLVFLAGLVFLTEA. Residue Cys-33 is modified to Sulfocysteine. 3 residues coordinate L-thyroxine: Lys-38, Glu-77, and Ser-140.

This sequence belongs to the transthyretin family. In terms of assembly, homotetramer. Dimer of dimers. In the homotetramer, subunits assemble around a central channel that can accommodate two ligand molecules. Interacts with RBP4. Sulfonation of the reactive cysteine Cys-33 enhances the stability of the native conformation of TTR, avoiding misassembly of the protein leading to amyloid formation. In terms of tissue distribution, strongly expressed in the brain, and to a lesser extent in the eye.

It localises to the secreted. Functionally, thyroid hormone-binding protein, with a much higher binding affinity for triiodothyronine (T3) than for thyroxine (T4). Probably transports triiodothyronine from the bloodstream to the brain. The chain is Transthyretin (TTR) from Crocodylus porosus (Saltwater crocodile).